We begin with the raw amino-acid sequence, 165 residues long: Ecotin-like protein 4 (165 aa).

It belongs to the protease inhibitor I11 (ecotin) family.

This chain is Ecotin-like protein 4, found in Trypanosoma brucei brucei (strain 927/4 GUTat10.1).